The chain runs to 264 residues: Apolipoprotein A-I (264 aa).

The N-terminal stretch at 1–18 (MKAVVLAVAVLFLTGSQA) is a signal peptide. Tandem repeats lie at residues 67-88 (LKLL…ADLG) and 89-110 (PVTQ…QEMN). The interval 67–264 (LKLLDNWDTL…DQATKQLTAQ (198 aa)) is 10 X approximate tandem repeats. At M109 the chain carries Methionine sulfoxide. The stretch at 111–121 (KDLQEVKQKVQ) is one 3; half-length repeat. Tandem repeats lie at residues 122-143 (PYLD…EKVG), 144-165 (PLGT…EKLT), 166-187 (PLGE…TQLA), 188-207 (PYSD…LRDS), and 208-229 (TTFA…EKAK). The 9; half-length repeat unit spans residues 230 to 240 (PALEDLRQGLL). Copy 10 of the repeat occupies 241-264 (PVLESLKASILSSIDQATKQLTAQ).

This sequence belongs to the apolipoprotein A1/A4/E family. As to quaternary structure, homodimer. Interacts with APOA1BP and CLU. Component of a sperm activating protein complex (SPAP), consisting of APOA1, an immunoglobulin heavy chain, an immunoglobulin light chain and albumin. Interacts with NDRG1. Interacts with SCGB3A2. Interacts with NAXE and YJEFN3. In terms of processing, glycosylated. Post-translationally, palmitoylated. Phosphorylation sites are present in the extracellular medium.

Its subcellular location is the secreted. In terms of biological role, participates in the reverse transport of cholesterol from tissues to the liver for excretion by promoting cholesterol efflux from tissues and by acting as a cofactor for the lecithin cholesterol acyltransferase (LCAT). As part of the SPAP complex, activates spermatozoa motility. The protein is Apolipoprotein A-I (APOA1) of Chinchilla lanigera (Long-tailed chinchilla).